The chain runs to 169 residues: X polypeptide (169 aa).

This sequence belongs to the IagB/IpgF/P19 family.

The polypeptide is X polypeptide (yubQ) (Escherichia coli (strain K12)).